The following is a 230-amino-acid chain: Uracil-DNA glycosylase (230 aa).

The active-site Proton acceptor is aspartate 70.

This sequence belongs to the uracil-DNA glycosylase (UDG) superfamily. UNG family.

Its subcellular location is the cytoplasm. It carries out the reaction Hydrolyzes single-stranded DNA or mismatched double-stranded DNA and polynucleotides, releasing free uracil.. Its function is as follows. Excises uracil residues from the DNA which can arise as a result of misincorporation of dUMP residues by DNA polymerase or due to deamination of cytosine. The polypeptide is Uracil-DNA glycosylase (Pseudomonas putida (strain ATCC 700007 / DSM 6899 / JCM 31910 / BCRC 17059 / LMG 24140 / F1)).